The primary structure comprises 1508 residues: DNA-directed RNA polymerase subunit beta' (1508 aa).

4 residues coordinate Zn(2+): Cys-71, Cys-73, Cys-86, and Cys-89. Residues Asp-470, Asp-472, and Asp-474 each coordinate Mg(2+). Zn(2+) is bound by residues Cys-804, Cys-878, Cys-885, and Cys-888.

This sequence belongs to the RNA polymerase beta' chain family. As to quaternary structure, the RNAP catalytic core consists of 2 alpha, 1 beta, 1 beta' and 1 omega subunit. When a sigma factor is associated with the core the holoenzyme is formed, which can initiate transcription. The cofactor is Mg(2+). Zn(2+) is required as a cofactor.

The enzyme catalyses RNA(n) + a ribonucleoside 5'-triphosphate = RNA(n+1) + diphosphate. Functionally, DNA-dependent RNA polymerase catalyzes the transcription of DNA into RNA using the four ribonucleoside triphosphates as substrates. This is DNA-directed RNA polymerase subunit beta' from Campylobacter fetus subsp. fetus (strain 82-40).